An 896-amino-acid polypeptide reads, in one-letter code: MIIDRIRLINFLSHEDSEIFFDTGVNIIVGHNGAGKSSIIDAIRFALFGDKRTKKIEDMIRKGAKSLEVEMEFRHGGHTYIIRRSITRRSKNPESNAMIMVDGSALSQSVKDANDYIEKNIITKSKDVFLNSVFSKQGEMDDLISGDPARRKKLLDEILEIEKLEETYDVLKDVIDSLQAGISNLDYLISENERDRDDLRRYQDDVAELSKQIDQEEAIESDLLRKKEEASAEYNAVSKELIMLDATLKNMMSLSDEANRYEEEIRKIDGKLQEISGSTERYNEITSSKVYASRERIRGYWTDKGQIIDYRKMLKNIDGQVQSYEDNMKKAAELQADHDQYEIMQRRMDEIKHELDDLRTYESKYVSLINEIEQKKKKREEYRKKQKDLGDEISRTLGRAFANASELVAIYEEIRRDIDEINTDLGNLQVKIGALRQKEEEIRRNMNMLEGHNKCPVCGTDLGDEGSRRIREHYSEDLNRLNEEIDHLEREASAIDEKKRQLISMESYLAKGKIREYETYDRQMKDLEAQITDDENSLSTIAYKHTKYEQLDEEYRSMHLEDLRQKYTDWNNAMAVISNIGDIEALRKQKDEVSKKLKDAEDRTHEIESEFPDINSYTPSYIGKIEDEVRLLEPQIKLAEDLKRQRETLREKVKDLRSRSAGMDEIQKRKNELSVKASESETRLKYVEGQIQATLSSLSGKRSKVETLRSHVSEIEQRISDRERDIERMKKIEKAINDVKRIREAFGKNGVPAMIRQSVSDYLTAKTRDYLSSFDLDFDDISVDQDFNVTVYRGGVPEGIDSLSGGEKTAVAFAIRVAVAQFLNADLSLLILDEPTAFLDEERRNSLSDIIEYTLKDSSVIPQVIIISHHRELLASANVAIEVKKIGGRSVVSNAD.

Residues Asn32–Ser38 and Gln137 contribute to the ATP site. Coiled-coil stretches lie at residues Arg200 to Glu274, Glu412 to Met505, Ile580 to Phe611, Ile636 to Arg669, and Arg702 to Lys731. A Zinc-hook domain is found at Tyr411–Ser507. Residues Cys455 and Cys458 each coordinate Zn(2+).

Belongs to the SMC family. RAD50 subfamily. Homodimer. Forms a heterotetramer composed of two Mre11 subunits and two Rad50 subunits. The cofactor is Zn(2+).

Part of the Rad50/Mre11 complex, which is involved in the early steps of DNA double-strand break (DSB) repair. The complex may facilitate opening of the processed DNA ends to aid in the recruitment of HerA and NurA. Rad50 controls the balance between DNA end bridging and DNA resection via ATP-dependent structural rearrangements of the Rad50/Mre11 complex. This Thermoplasma acidophilum (strain ATCC 25905 / DSM 1728 / JCM 9062 / NBRC 15155 / AMRC-C165) protein is DNA double-strand break repair Rad50 ATPase.